We begin with the raw amino-acid sequence, 499 residues long: Cytosol aminopeptidase (499 aa).

Mn(2+) is bound by residues Lys267 and Asp272. The active site involves Lys279. Mn(2+) is bound by residues Asp290, Asp349, and Glu351. The active site involves Arg353.

The protein belongs to the peptidase M17 family. Requires Mn(2+) as cofactor.

The protein localises to the cytoplasm. The enzyme catalyses Release of an N-terminal amino acid, Xaa-|-Yaa-, in which Xaa is preferably Leu, but may be other amino acids including Pro although not Arg or Lys, and Yaa may be Pro. Amino acid amides and methyl esters are also readily hydrolyzed, but rates on arylamides are exceedingly low.. It catalyses the reaction Release of an N-terminal amino acid, preferentially leucine, but not glutamic or aspartic acids.. In terms of biological role, presumably involved in the processing and regular turnover of intracellular proteins. Catalyzes the removal of unsubstituted N-terminal amino acids from various peptides. This Buchnera aphidicola subsp. Acyrthosiphon pisum (strain APS) (Acyrthosiphon pisum symbiotic bacterium) protein is Cytosol aminopeptidase (pepA).